The sequence spans 536 residues: T-complex protein 1 subunit delta (536 aa).

Positions 1–21 (MAAVAAPMASKPRGSKAESFV) are disordered.

This sequence belongs to the TCP-1 chaperonin family. In terms of assembly, heterooligomeric complex of about 850 to 900 kDa that forms two stacked rings, 12 to 16 nm in diameter.

It localises to the cytoplasm. Molecular chaperone; assists the folding of proteins upon ATP hydrolysis. Known to play a role, in vitro, in the folding of actin and tubulin. This chain is T-complex protein 1 subunit delta, found in Arabidopsis thaliana (Mouse-ear cress).